A 166-amino-acid polypeptide reads, in one-letter code: Large ribosomal subunit protein uL10 (166 aa).

This sequence belongs to the universal ribosomal protein uL10 family. In terms of assembly, part of the ribosomal stalk of the 50S ribosomal subunit. The N-terminus interacts with L11 and the large rRNA to form the base of the stalk. The C-terminus forms an elongated spine to which L12 dimers bind in a sequential fashion forming a multimeric L10(L12)X complex.

Forms part of the ribosomal stalk, playing a central role in the interaction of the ribosome with GTP-bound translation factors. The chain is Large ribosomal subunit protein uL10 from Oceanobacillus iheyensis (strain DSM 14371 / CIP 107618 / JCM 11309 / KCTC 3954 / HTE831).